Consider the following 399-residue polypeptide: Elongation factor Tu (399 aa).

Positions 10–209 (KPHVNIGTIG…AVDSYIPTPT (200 aa)) constitute a tr-type G domain. Residues 19 to 26 (GHVDHGKT) are G1. Residue 19–26 (GHVDHGKT) participates in GTP binding. Threonine 26 contributes to the Mg(2+) binding site. Positions 60 to 64 (GITIA) are G2. The tract at residues 81 to 84 (DCPG) is G3. GTP-binding positions include 81-85 (DCPGH) and 136-139 (NKAD). Residues 136 to 139 (NKAD) form a G4 region. Residues 174 to 176 (SAL) form a G5 region.

It belongs to the TRAFAC class translation factor GTPase superfamily. Classic translation factor GTPase family. EF-Tu/EF-1A subfamily. Monomer.

It localises to the cytoplasm. The catalysed reaction is GTP + H2O = GDP + phosphate + H(+). Functionally, GTP hydrolase that promotes the GTP-dependent binding of aminoacyl-tRNA to the A-site of ribosomes during protein biosynthesis. This is Elongation factor Tu from Campylobacter jejuni (strain RM1221).